A 119-amino-acid chain; its full sequence is Protein TusC (119 aa).

Belongs to the DsrF/TusC family. As to quaternary structure, heterohexamer, formed by a dimer of trimers. The hexameric TusBCD complex contains 2 copies each of TusB, TusC and TusD. The TusBCD complex interacts with TusE.

It localises to the cytoplasm. Functionally, part of a sulfur-relay system required for 2-thiolation of 5-methylaminomethyl-2-thiouridine (mnm(5)s(2)U) at tRNA wobble positions. The protein is Protein TusC of Shigella boydii serotype 18 (strain CDC 3083-94 / BS512).